The primary structure comprises 263 residues: Small ribosomal subunit protein eS4 (263 aa).

The region spanning 42-104 (LPLIIFLRNR…TGEHFRLVYD (63 aa)) is the S4 RNA-binding domain.

The protein belongs to the eukaryotic ribosomal protein eS4 family. Component of the small ribosomal subunit.

The protein resides in the cytoplasm. In terms of biological role, component of the small ribosomal subunit. The ribosome is a large ribonucleoprotein complex responsible for the synthesis of proteins in the cell. The protein is Small ribosomal subunit protein eS4 (rps4) of Xenopus tropicalis (Western clawed frog).